Here is a 343-residue protein sequence, read N- to C-terminus: Ketol-acid reductoisomerase (NADP(+)) (343 aa).

The 180-residue stretch at 7–186 (TTVYYDEDAD…GCTRAGVIET (180 aa)) folds into the KARI N-terminal Rossmann domain. NADP(+)-binding positions include 30–33 (YGSQ), arginine 53, serine 56, serine 58, and 88–91 (DTIQ). Histidine 112 is a catalytic residue. Residue glycine 138 coordinates NADP(+). The 143-residue stretch at 187-329 (SFQEEVETDL…ENLRELFAWG (143 aa)) folds into the KARI C-terminal knotted domain. Mg(2+) is bound by residues aspartate 195, glutamate 199, glutamate 231, and glutamate 235. A substrate-binding site is contributed by serine 256.

Belongs to the ketol-acid reductoisomerase family. Mg(2+) serves as cofactor.

It catalyses the reaction (2R)-2,3-dihydroxy-3-methylbutanoate + NADP(+) = (2S)-2-acetolactate + NADPH + H(+). It carries out the reaction (2R,3R)-2,3-dihydroxy-3-methylpentanoate + NADP(+) = (S)-2-ethyl-2-hydroxy-3-oxobutanoate + NADPH + H(+). It participates in amino-acid biosynthesis; L-isoleucine biosynthesis; L-isoleucine from 2-oxobutanoate: step 2/4. Its pathway is amino-acid biosynthesis; L-valine biosynthesis; L-valine from pyruvate: step 2/4. In terms of biological role, involved in the biosynthesis of branched-chain amino acids (BCAA). Catalyzes an alkyl-migration followed by a ketol-acid reduction of (S)-2-acetolactate (S2AL) to yield (R)-2,3-dihydroxy-isovalerate. In the isomerase reaction, S2AL is rearranged via a Mg-dependent methyl migration to produce 3-hydroxy-3-methyl-2-ketobutyrate (HMKB). In the reductase reaction, this 2-ketoacid undergoes a metal-dependent reduction by NADPH to yield (R)-2,3-dihydroxy-isovalerate. The protein is Ketol-acid reductoisomerase (NADP(+)) of Haloarcula marismortui (strain ATCC 43049 / DSM 3752 / JCM 8966 / VKM B-1809) (Halobacterium marismortui).